The sequence spans 864 residues: NT-3 growth factor receptor (864 aa).

A signal peptide spans 1-31; it reads MDVSLCPAKCSFWRIFLLGSVWLDYVGSVLA. Disulfide bonds link Cys32/Cys38 and Cys36/Cys45. At 32–429 the chain is on the extracellular side; it reads CPANCVCSKT…TVTHKPEEDT (398 aa). 3 N-linked (GlcNAc...) asparagine glycosylation sites follow: Asn68, Asn72, and Asn79. LRR repeat units lie at residues 104 to 125 and 128 to 149; these read GLQKLTIKNSGLRNIQPRAFAK and HLRYINLSSNRLTTLSWQLFQT. Asn133 and Asn163 each carry an N-linked (GlcNAc...) asparagine glycan. Residues 160-209 enclose the LRRCT domain; the sequence is NFFNCSCDIRWMQLWQEQGEARLDSQSLYCISADGSQLPLFRMNISQCDL. Disulfide bonds link Cys164-Cys189 and Cys166-Cys207. 7 N-linked (GlcNAc...) asparagine glycosylation sites follow: Asn203, Asn218, Asn232, Asn259, Asn267, Asn272, and Asn294. Ig-like C2-type domains lie at 210-300 and 309-382; these read PEIS…VALT and SLVE…IAKN. A disulfide bridge links Cys231 with Cys284. Cys320 and Cys362 form a disulfide bridge. 2 N-linked (GlcNAc...) asparagine glycosylation sites follow: Asn375 and Asn388. The chain crosses the membrane as a helical span at residues 430–453; that stretch reads FGVSIAVGLAAFACVLLVVLFIMI. At 454 to 864 the chain is on the cytoplasmic side; it reads NKYGRRSKFG…ATPIYLDILG (411 aa). Position 493 is a phosphoserine (Ser493). At Tyr516 the chain carries Phosphotyrosine; by autocatalysis. Residues 538–853 enclose the Protein kinase domain; the sequence is IVLKRELGEG…EIYKILHALG (316 aa). ATP-binding positions include 544-552 and Lys572; that span reads LGEGAFGKV. Asp679 (proton acceptor) is an active-site residue. Phosphotyrosine; by autocatalysis occurs at positions 705, 709, 710, and 859.

This sequence belongs to the protein kinase superfamily. Tyr protein kinase family. Insulin receptor subfamily. In terms of assembly, exists in a dynamic equilibrium between monomeric (low affinity) and dimeric (high affinity) structures. Binds SH2B2. Interacts with SQSTM1 and KIDINS220. Interacts with PTPRS. Interacts with MAPK8IP3/JIP3. In terms of processing, ligand-mediated auto-phosphorylation. Widely expressed, mainly in the nervous tissue.

The protein localises to the membrane. It carries out the reaction L-tyrosyl-[protein] + ATP = O-phospho-L-tyrosyl-[protein] + ADP + H(+). Its function is as follows. Receptor tyrosine kinase involved in nervous system and probably heart development. Upon binding of its ligand NTF3/neurotrophin-3, NTRK3 autophosphorylates and activates different signaling pathways, including the phosphatidylinositol 3-kinase/AKT and the MAPK pathways, that control cell survival and differentiation. NTRK3 isoforms containing insertions within the kinase domain can autophosphorylate in response to NTF3/neurotrophin-3, but cannot mediate downstream phenotypic responses. This Rattus norvegicus (Rat) protein is NT-3 growth factor receptor (Ntrk3).